A 70-amino-acid polypeptide reads, in one-letter code: Beta sliding clamp (70 aa).

The protein belongs to the beta sliding clamp family. Forms a ring-shaped head-to-tail homodimer around DNA which binds and tethers DNA polymerases and other proteins to the DNA. The DNA replisome complex has a single clamp-loading complex (3 tau and 1 each of delta, delta', psi and chi subunits) which binds 3 Pol III cores (1 core on the leading strand and 2 on the lagging strand) each with a beta sliding clamp dimer. Additional proteins in the replisome are other copies of gamma, psi and chi, Ssb, DNA helicase and RNA primase.

The protein localises to the cytoplasm. Its function is as follows. Confers DNA tethering and processivity to DNA polymerases and other proteins. Acts as a clamp, forming a ring around DNA (a reaction catalyzed by the clamp-loading complex) which diffuses in an ATP-independent manner freely and bidirectionally along dsDNA. Initially characterized for its ability to contact the catalytic subunit of DNA polymerase III (Pol III), a complex, multichain enzyme responsible for most of the replicative synthesis in bacteria; Pol III exhibits 3'-5' exonuclease proofreading activity. The beta chain is required for initiation of replication as well as for processivity of DNA replication. The chain is Beta sliding clamp (dnaN) from Rhodobacter capsulatus (Rhodopseudomonas capsulata).